The sequence spans 299 residues: Trimeric intracellular cation channel type A (299 aa).

The Lumenal portion of the chain corresponds to 1-18; that stretch reads MELLSALSLGELALSFSR. Residues 19-39 traverse the membrane as a helical segment; it reads VPLFPVFDLSYFIVSILYLKY. Over 40–51 the chain is Cytoplasmic; sequence EPGAVELSRRHP. A helical membrane pass occupies residues 52-72; that stretch reads IASWLCAMLHCFGSYILADLL. The Lumenal segment spans residues 73–85; sequence LGEPLIDYFSNNS. Position 74 (Gly-74) interacts with Ca(2+). A helical membrane pass occupies residues 86–106; it reads SILLASAVWYLIFFCPLDLFY. Residues 107–144 lie on the Cytoplasmic side of the membrane; the sequence is KCVCFLPVKLIFVAMKEVVRVRKIAVGIHHAHHHYHHG. Positions 122 and 126 each coordinate a 1,2-diacyl-sn-glycero-3-phospho-(1D-myo-inositol-4,5-bisphosphate). The helical transmembrane segment at 145-165 threads the bilayer; it reads WFVMIATGWVKGSGVALMSNF. The Lumenal segment spans residues 166–178; it reads EQLLRGVWKPETN. A helical membrane pass occupies residues 179–199; sequence EILHMSFPTKASLYGAILFTL. The Cytoplasmic segment spans residues 200–209; the sequence is QQTRWLPVSK. The chain crosses the membrane as a helical span at residues 210–230; sequence ASLIFIFTLFMVSCKVFLTAT. Topologically, residues 231-234 are lumenal; it reads HSHS. The chain crosses the membrane as a helical span at residues 235 to 255; that stretch reads SPFDALEGYICPVLFGSACGG. The Cytoplasmic segment spans residues 256–299; it reads DHHHDNHGGSHSGGGPGAQHSAMPAKSKEELSEGSRKKKAKKAD. The tract at residues 260 to 299 is disordered; the sequence is DNHGGSHSGGGPGAQHSAMPAKSKEELSEGSRKKKAKKAD. Over residues 281 to 290 the composition is skewed to basic and acidic residues; sequence KSKEELSEGS.

Belongs to the TMEM38 family. In terms of assembly, homotrimer; conformation seems to be controled by binding to diacylglycerol (DAG).

It is found in the sarcoplasmic reticulum membrane. The protein localises to the nucleus membrane. It catalyses the reaction K(+)(in) = K(+)(out). Its activity is regulated as follows. Channel activity is activated by a change of voltage within the sarcoplasmic reticulum lumen and blocked by luminal high Ca(2+) levels. In terms of biological role, intracellular monovalent cation channel required for maintenance of rapid intracellular calcium release. Acts as a potassium counter-ion channel that functions in synchronization with calcium release from intracellular stores. Opened by a change of voltage within the sarcoplasmic reticulum lumen. The polypeptide is Trimeric intracellular cation channel type A (Homo sapiens (Human)).